The chain runs to 180 residues: tRNA (cytidine(56)-2'-O)-methyltransferase (180 aa).

Residues leucine 85, 114-118 (GAEKV), and 132-139 (VGNQPHSE) each bind S-adenosyl-L-methionine.

The protein belongs to the aTrm56 family. As to quaternary structure, homodimer.

The protein localises to the cytoplasm. The catalysed reaction is cytidine(56) in tRNA + S-adenosyl-L-methionine = 2'-O-methylcytidine(56) in tRNA + S-adenosyl-L-homocysteine + H(+). Functionally, specifically catalyzes the AdoMet-dependent 2'-O-ribose methylation of cytidine at position 56 in tRNAs. This is tRNA (cytidine(56)-2'-O)-methyltransferase from Thermococcus kodakarensis (strain ATCC BAA-918 / JCM 12380 / KOD1) (Pyrococcus kodakaraensis (strain KOD1)).